A 549-amino-acid polypeptide reads, in one-letter code: Probable protein kinase UbiB (549 aa).

Positions 123-501 (DFNETPLASA…QQQAHKSNYL (379 aa)) constitute a Protein kinase domain. ATP-binding positions include 129 to 137 (LASASISQV) and Lys152. Catalysis depends on Asp287, which acts as the Proton acceptor. The next 2 helical transmembrane spans lie at 498–518 (SNYL…LFNQ) and 520–540 (ATLW…IIGW).

This sequence belongs to the ABC1 family. UbiB subfamily.

It localises to the cell inner membrane. It participates in cofactor biosynthesis; ubiquinone biosynthesis [regulation]. Functionally, is probably a protein kinase regulator of UbiI activity which is involved in aerobic coenzyme Q (ubiquinone) biosynthesis. The protein is Probable protein kinase UbiB of Shewanella sp. (strain MR-4).